The chain runs to 326 residues: N-acetyl-gamma-glutamyl-phosphate reductase (326 aa).

Cys-155 is an active-site residue.

This sequence belongs to the NAGSA dehydrogenase family. Type 1 subfamily.

The protein localises to the cytoplasm. The catalysed reaction is N-acetyl-L-glutamate 5-semialdehyde + phosphate + NADP(+) = N-acetyl-L-glutamyl 5-phosphate + NADPH + H(+). It participates in amino-acid biosynthesis; L-arginine biosynthesis; N(2)-acetyl-L-ornithine from L-glutamate: step 3/4. Its function is as follows. Catalyzes the NADPH-dependent reduction of N-acetyl-5-glutamyl phosphate to yield N-acetyl-L-glutamate 5-semialdehyde. The protein is N-acetyl-gamma-glutamyl-phosphate reductase of Shewanella oneidensis (strain ATCC 700550 / JCM 31522 / CIP 106686 / LMG 19005 / NCIMB 14063 / MR-1).